The chain runs to 333 residues: Glycerol-3-phosphate dehydrogenase [NAD(P)+] (333 aa).

3 residues coordinate NADPH: Tyr14, His34, and Lys108. The sn-glycerol 3-phosphate site is built by Lys108, Gly137, and Thr139. Ala141 is a binding site for NADPH. The sn-glycerol 3-phosphate site is built by Lys193, Asp247, Ser257, Arg258, and Asn259. Lys193 functions as the Proton acceptor in the catalytic mechanism. Arg258 is a binding site for NADPH. The NADPH site is built by Leu282 and Glu284.

This sequence belongs to the NAD-dependent glycerol-3-phosphate dehydrogenase family.

Its subcellular location is the cytoplasm. The catalysed reaction is sn-glycerol 3-phosphate + NAD(+) = dihydroxyacetone phosphate + NADH + H(+). The enzyme catalyses sn-glycerol 3-phosphate + NADP(+) = dihydroxyacetone phosphate + NADPH + H(+). The protein operates within membrane lipid metabolism; glycerophospholipid metabolism. Its function is as follows. Catalyzes the reduction of the glycolytic intermediate dihydroxyacetone phosphate (DHAP) to sn-glycerol 3-phosphate (G3P), the key precursor for phospholipid synthesis. The chain is Glycerol-3-phosphate dehydrogenase [NAD(P)+] from Blochmanniella floridana.